Consider the following 120-residue polypeptide: MSKLNVTNARRKTRVRIALRRTANGRPRLSVFRSSKHIYAQVIDDLKGETLASASSLEKSMREAGNTGANIDAAKAVGKLLAERAVKQGVKEVVFDRGGYLYHGRVKALADAARESGLSF.

This sequence belongs to the universal ribosomal protein uL18 family. As to quaternary structure, part of the 50S ribosomal subunit; part of the 5S rRNA/L5/L18/L25 subcomplex. Contacts the 5S and 23S rRNAs.

In terms of biological role, this is one of the proteins that bind and probably mediate the attachment of the 5S RNA into the large ribosomal subunit, where it forms part of the central protuberance. The chain is Large ribosomal subunit protein uL18 from Rhodopseudomonas palustris (strain HaA2).